The chain runs to 321 residues: Beta-ketoacyl-[acyl-carrier-protein] synthase III (321 aa).

Catalysis depends on residues Cys-113 and His-248. The interval 249 to 253 (QANAR) is ACP-binding. Asn-278 is an active-site residue.

The protein belongs to the thiolase-like superfamily. FabH family. As to quaternary structure, homodimer.

It localises to the cytoplasm. The catalysed reaction is malonyl-[ACP] + acetyl-CoA + H(+) = 3-oxobutanoyl-[ACP] + CO2 + CoA. The protein operates within lipid metabolism; fatty acid biosynthesis. Catalyzes the condensation reaction of fatty acid synthesis by the addition to an acyl acceptor of two carbons from malonyl-ACP. Catalyzes the first condensation reaction which initiates fatty acid synthesis and may therefore play a role in governing the total rate of fatty acid production. Possesses both acetoacetyl-ACP synthase and acetyl transacylase activities. Its substrate specificity determines the biosynthesis of branched-chain and/or straight-chain of fatty acids. The sequence is that of Beta-ketoacyl-[acyl-carrier-protein] synthase III from Erythrobacter litoralis (strain HTCC2594).